Consider the following 195-residue polypeptide: Rubrerythrin-1 (195 aa).

The region spanning 3–150 (SLKGTKTAEN…ALLKNIEENK (148 aa)) is the Ferritin-like diiron domain. E20, E53, E98, E101, E132, H135, C162, C165, C178, and C181 together coordinate Fe(3+). A Rubredoxin-like domain is found at 157-191 (VKFWKCIKCGYIFEGKTAPKVCPACLHPQAYFEIL).

Homodimer. It depends on Fe(3+) as a cofactor.

The catalysed reaction is H2O2 + NADH + H(+) = NAD(+) + 2 H2O. Its activity is regulated as follows. Rubredoxin (Rd) increases the NADH consumption rate by serving as an intermediary electron-transfer shuttle between NROR and RubY. Functionally, functions as the terminal component of an NADH peroxidase (NADH:H(2)O(2) oxidoreductase) when using NADH:rubredoxin oxidoreductase (NROR) as the electron transport intermediary from NADH to RubY. This chain is Rubrerythrin-1 (rbr1), found in Clostridium acetobutylicum (strain ATCC 824 / DSM 792 / JCM 1419 / IAM 19013 / LMG 5710 / NBRC 13948 / NRRL B-527 / VKM B-1787 / 2291 / W).